The chain runs to 93 residues: UPF0058 protein AF_0738 (93 aa).

The protein belongs to the UPF0058 family.

The polypeptide is UPF0058 protein AF_0738 (Archaeoglobus fulgidus (strain ATCC 49558 / DSM 4304 / JCM 9628 / NBRC 100126 / VC-16)).